Consider the following 170-residue polypeptide: Putative zinc finger protein 542 (170 aa).

Residues 1–42 form the KRAB domain; it reads MLENYQNLVWLGLSISKSVISLLEKRKLPWIMAKEEIRGPLP. 2 C2H2-type zinc fingers span residues 98–120 and 126–148; these read NVCK…KRNH and NQCL…QRIH. The segment at 154–170 adopts a C2H2-type 3; degenerate zinc-finger fold; sequence YKCNECIKTFNQRAHLT.

The protein belongs to the krueppel C2H2-type zinc-finger protein family.

Its subcellular location is the nucleus. Functionally, may be involved in transcriptional regulation. In Homo sapiens (Human), this protein is Putative zinc finger protein 542 (ZNF542P).